Here is a 430-residue protein sequence, read N- to C-terminus: MSSVVVVGTQWGDEGKGKITDFLSENAEAIARYQGGNNAGHTIKFDGVTYKLHLIPSGIFYKEKISVIGNGMVVDPKALVEELKYLHDKGVDTSNLRISNRAHIILPYHIRIDEADEERKGANKIGTTKKGIGPAYMDKAARVGIRIIDLLDKETFKEKLEHNLGEKNRLLERFYELEGFKLEDILDEYYEYGQQFKEYVCDTSVVLNDALDDGKRVLFEGAQGVMLDIDQGTYPFVTSSNPIAGGVTIGSGVGPSKINHVVGVAKAYTTRVGDGPFPTELFDSIGDTIREVGHEYGTTTGRPRRVGWFDSVVVRHARRVSGLTDLSLTLLDVLTGIETLKICVAYKLDGKTITEFPASLKDLARCEPVYEELPGWTEDITGVTSLDDLPVNCRHYMERIAQLTGVQVSMFSVGPDRAQTHVIKSVWRLA.

Residues Gly-12–Lys-18 and Gly-40–Thr-42 contribute to the GTP site. Catalysis depends on Asp-13, which acts as the Proton acceptor. Mg(2+)-binding residues include Asp-13 and Gly-40. Residues Asp-13–Lys-16, Asn-38–His-41, Thr-128, Arg-142, Gln-223, Thr-238, and Arg-302 contribute to the IMP site. The active-site Proton donor is the His-41. Thr-298–Arg-304 contributes to the substrate binding site. Residues Arg-304, Leu-330 to Asp-332, and Ser-412 to Gly-414 each bind GTP.

This sequence belongs to the adenylosuccinate synthetase family. In terms of assembly, homodimer. The cofactor is Mg(2+).

The protein resides in the cytoplasm. The enzyme catalyses IMP + L-aspartate + GTP = N(6)-(1,2-dicarboxyethyl)-AMP + GDP + phosphate + 2 H(+). The protein operates within purine metabolism; AMP biosynthesis via de novo pathway; AMP from IMP: step 1/2. Functionally, plays an important role in the de novo pathway of purine nucleotide biosynthesis. Catalyzes the first committed step in the biosynthesis of AMP from IMP. This Listeria monocytogenes serovar 1/2a (strain ATCC BAA-679 / EGD-e) protein is Adenylosuccinate synthetase.